The primary structure comprises 40 residues: Accessory gland-specific peptide 57Db (40 aa).

Positions M1 to A17 are cleaved as a signal peptide.

As to expression, lumen fluid of male accessory glands, becomes seminal fluid.

It localises to the secreted. Functionally, transferred from male to female during mating and may affect egglaying and behavior after mating. The sequence is that of Accessory gland-specific peptide 57Db (Mst57Db) from Drosophila melanogaster (Fruit fly).